We begin with the raw amino-acid sequence, 209 residues long: High mobility group protein B2 (209 aa).

Lys3 carries the post-translational modification N6-acetyllysine. A DNA-binding region (HMG box 1) is located at residues 9 to 79; the sequence is PRGKMSSYAF…RYDREMKNYV (71 aa). Position 23 is a cysteine sulfonic acid (-SO3H); alternate (Cys23). A disulfide bond links Cys23 and Cys45. Lys30 bears the N6-acetyllysine mark. At Ser35 the chain carries Phosphoserine. Lys43 is modified (N6-acetyllysine). Cys45 carries the post-translational modification Cysteine sulfonic acid (-SO3H); alternate. The segment covering 52 to 76 has biased composition (basic and acidic residues); that stretch reads MSAKEKSKFEDMAKSDKARYDREMK. Disordered regions lie at residues 52–150 and 162–209; these read MSAK…KAAK and YRAK…EDEE. Lys90 bears the N6-acetyllysine mark. Positions 95 to 163 form a DNA-binding region, HMG box 2; that stretch reads PKRPPSAFFL…KYEKDIAAYR (69 aa). Phosphoserine is present on Ser100. Cysteine sulfonic acid (-SO3H) is present on Cys106. 3 stretches are compositionally biased toward basic and acidic residues: residues 107-117, 137-150, and 162-172; these read SEHRPKIKSEH, SAKDKQPYEQKAAK, and YRAKGKSEAGK. N6-acetyllysine is present on residues Lys114 and Lys141. A required for chemotactic activity region spans residues 165-180; the sequence is KGKSEAGKKGPGRPTG. The segment covering 187–209 has biased composition (acidic residues); that stretch reads PEDEEEEEEEEDEDEEEEDEDEE.

Belongs to the HMGB family. As to quaternary structure, interacts with POU2F2, POU2F1 and POU3F1. Component of the RAG complex composed of core components RAG1 and RAG2, and associated component HMGB1 or HMGB2. Component of the SET complex, composed of at least ANP32A, APEX1, HMGB2, NME1, SET and TREX1. Directly interacts with SET. Interacts with LEF1. Reduction/oxidation of cysteine residues Cys-23, Cys-45 and Cys-106 and a possible intramolecular disulfide bond involving Cys-23 and Cys-45 give rise to different redox forms with specific functional activities in various cellular compartments: 1- fully reduced HMGB2 (HMGB2C23hC45hC106h), 2- disulfide HMGB2 (HMGB2C23-C45C106h) and 3- sulfonyl HMGB2 (HMGB2C23soC45soC106so).

The protein localises to the nucleus. It is found in the chromosome. The protein resides in the cytoplasm. It localises to the secreted. Functionally, multifunctional protein with various roles in different cellular compartments. May act in a redox sensitive manner. In the nucleus is an abundant chromatin-associated non-histone protein involved in transcription, chromatin remodeling and V(D)J recombination and probably other processes. Binds DNA with a preference to non-canonical DNA structures such as single-stranded DNA. Can bent DNA and enhance DNA flexibility by looping thus providing a mechanism to promote activities on various gene promoters by enhancing transcription factor binding and/or bringing distant regulatory sequences into close proximity. Involved in V(D)J recombination by acting as a cofactor of the RAG complex: acts by stimulating cleavage and RAG protein binding at the 23 bp spacer of conserved recombination signal sequences (RSS). Proposed to be involved in the innate immune response to nucleic acids by acting as a cytoplasmic promiscuous immunogenic DNA/RNA sensor which cooperates with subsequent discriminative sensing by specific pattern recognition receptors. In the extracellular compartment acts as a chemokine. Promotes proliferation and migration of endothelial cells implicating AGER/RAGE. Has antimicrobial activity in gastrointestinal epithelial tissues. Involved in inflammatory response to antigenic stimulus coupled with pro-inflammatory activity. May play a role in germ cell differentiation. Involved in modulation of neurogenesis probably by regulation of neural stem proliferation. Involved in articular cartilage surface maintenance implicating LEF1 and the Wnt/beta-catenin pathway. This is High mobility group protein B2 (HMGB2) from Bos taurus (Bovine).